The following is an 824-amino-acid chain: MRQSLLFLTSVVPFVLAPRPPDDPGFGPHQRLEKLDSLLSDYDILSLSNIQQHSVRKRDLQTSTHVETLLTFSALKRHFKLYLTSSTERFSQNFKVVVVDGKNESEYTVKWQDFFTGHVVGEPDSRVLAHIRDDDVIIRINTDGAEYNIEPLWRFVNDTKDKRMLVYKSEDIKNVSRLQSPKVCGYLKVDNEELLPKGLVDREPPEELVHRVKRRADPDPMKNTCKLLVVADHRFYRYMGRGEESTTTNYLIELIDRVDDIYRNTSWDNAGFKGYGIQIEQIRILKSPQEVKPGEKHYNMAKSYPNEEKDAWDVKMLLEQFSFDIAEEASKVCLAHLFTYQDFDMGTLGLAYVGSPRANSHGGVCPKAYYSPVGKKNIYLNSGLTSTKNYGKTILTKEADLVTTHELGHNFGAEHDPDGLAECAPNEDQGGKYVMYPIAVSGDHENNKMFSNCSKQSIYKTIESKAQECFQERSNKVCGNSRVDEGEECDPGIMYLNNDTCCNSDCTLKEGVQCSDRNSPCCKNCQFETAQKKCQEAINATCKGVSYCTGNSSECPPPGNAEDDTVCLDLGKCKDGKCIPFCEREQQLESCACNETDNSCKVCCRDLSGRCVPYVDAEQKNLFLRKGKPCTVGFCDMNGKCEKRVQDVIERFWDFIDQLSINTFGKFLADNIVGSVLVFSLIFWIPFSILVHCVDKKLDKQYESLSLFHPSNVEMLSSMDSASVRIIKPFPAPQTPGRLQPAPVIPSAPAAPKLDHQRMDTIQEDPSTDSHMDEDGFEKDPFPNSSTAAKSFEDLTDHPVTRSEKAASFKLQRQNRVDSKETEC.

Residues 1–17 form the signal peptide; that stretch reads MRQSLLFLTSVVPFVLA. Positions 18–214 are excised as a propeptide; the sequence is PRPPDDPGFG…PEELVHRVKR (197 aa). Residues Asn103, Asn157, and Asn174 are each glycosylated (N-linked (GlcNAc...) asparagine). The short motif at 182–189 is the Cysteine switch element; the sequence is KVCGYLKV. Cys184 contacts Zn(2+). At 215 to 671 the chain is on the extracellular side; sequence RADPDPMKNT…NTFGKFLADN (457 aa). Residues 223 to 474 form the Peptidase M12B domain; sequence NTCKLLVVAD…KAQECFQERS (252 aa). Intrachain disulfides connect Cys225/Cys333, Cys365/Cys469, and Cys423/Cys453. A glycan (N-linked (GlcNAc...) asparagine) is linked at Asn264. Position 405 (His405) interacts with Zn(2+). Residue Glu406 is part of the active site. His409 and His415 together coordinate Zn(2+). 4 N-linked (GlcNAc...) asparagine glycosylation sites follow: Asn452, Asn498, Asn539, and Asn551. The region spanning 475–563 is the Disintegrin domain; sequence NKVCGNSRVD…ECPPPGNAED (89 aa). 4 disulfides stabilise this stretch: Cys534–Cys555, Cys573–Cys582, Cys578–Cys591, and Cys593–Cys600. N-linked (GlcNAc...) asparagine glycosylation is present at Asn594. The interval 603 to 671 is crambin-like; sequence CCRDLSGRCV…NTFGKFLADN (69 aa). Residues 672-692 form a helical membrane-spanning segment; the sequence is IVGSVLVFSLIFWIPFSILVH. The Cytoplasmic portion of the chain corresponds to 693–824; that stretch reads CVDKKLDKQY…NRVDSKETEC (132 aa). Short sequence motifs (SH3-binding) lie at residues 731-738 and 741-748; these read PAPQTPGR and PAPVIPSA. Positions 732-824 are disordered; sequence APQTPGRLQP…NRVDSKETEC (93 aa). Thr735 is subject to Phosphothreonine; by MAPK14. Low complexity predominate over residues 741 to 752; that stretch reads PAPVIPSAPAAP. Thr761 is modified (phosphothreonine). Position 767 is a phosphoserine (Ser767). Composition is skewed to basic and acidic residues over residues 768-781, 791-807, and 815-824; these read TDSHMDEDGFEKDP, SFEDLTDHPVTRSEKAA, and NRVDSKETEC. Ser791 and Ser819 each carry phosphoserine.

In terms of assembly, interacts with MAD2L1, MAPK14 and MUC1. Interacts with iRhom1/RHBDF1 and iRhom2/RHBDF2. Interacts with FRMD8 via its interaction with iRhom1/RHBDF1 and iRhom2/RHBDF2. Interacts with TSPAN8. It depends on Zn(2+) as a cofactor. Post-translationally, the precursor is cleaved by a furin endopeptidase. In terms of processing, phosphorylated. Stimulation by growth factor or phorbol 12-myristate 13-acetate induces phosphorylation of Ser-819 but decreases phosphorylation of Ser-791. Phosphorylation at Thr-735 by MAPK14 is required for ADAM17-mediated ectodomain shedding. Ubiquitously expressed. Expressed at highest levels in adult heart, placenta, skeletal muscle, pancreas, spleen, thymus, prostate, testes, ovary and small intestine, and in fetal brain, lung, liver and kidney. Expressed in natural killer cells (at protein level).

It localises to the cell membrane. It carries out the reaction Narrow endopeptidase specificity. Cleaves Pro-Leu-Ala-Gln-Ala-|-Val-Arg-Ser-Ser-Ser in the membrane-bound, 26-kDa form of tumor necrosis factor alpha (TNFalpha). Similarly cleaves other membrane-anchored, cell-surface proteins to 'shed' the extracellular domains.. Functionally, transmembrane metalloprotease which mediates the ectodomain shedding of a myriad of transmembrane proteins including adhesion proteins, growth factor precursors and cytokines important for inflammation and immunity. Cleaves the membrane-bound precursor of TNF-alpha to its mature soluble form. Responsible for the proteolytical release of soluble JAM3 from endothelial cells surface. Responsible for the proteolytic release of several other cell-surface proteins, including p75 TNF-receptor, interleukin 1 receptor type II, p55 TNF-receptor, transforming growth factor-alpha, L-selectin, growth hormone receptor, MUC1 and the amyloid precursor protein. Acts as an activator of Notch pathway by mediating cleavage of Notch, generating the membrane-associated intermediate fragment called Notch extracellular truncation (NEXT). Plays a role in the proteolytic processing of ACE2. Plays a role in hemostasis through shedding of GP1BA, the platelet glycoprotein Ib alpha chain. Mediates the proteolytic cleavage of LAG3, leading to release the secreted form of LAG3. Mediates the proteolytic cleavage of IL6R, leading to the release of secreted form of IL6R. Mediates the proteolytic cleavage and shedding of FCGR3A upon NK cell stimulation, a mechanism that allows for increased NK cell motility and detachment from opsonized target cells. Cleaves TREM2, resulting in shedding of the TREM2 ectodomain. The sequence is that of Disintegrin and metalloproteinase domain-containing protein 17 from Homo sapiens (Human).